The primary structure comprises 799 residues: MDCSAPKEMNKPPTNILEATVPGHRDSPRAPRTSPEQDLPAAAPAAAVQPPRVPRSASTGAQTFQSADARACEAQRPGVGFCKLSSPQAQATSAALRDLSEGHSAQANPPSGAAGAGNALHCKIPALRGPEEDENVSVGKGTLEHNNTPAVGWVNMSQSTVVLGTDGIASVLPGSVATTTIPEDEQGDENKARGNWSSKLDFILSMVGYAVGLGNVWRFPYLAFQNGGGAFLIPYLMMLALAGLPIFFLEVSLGQFASQGPVSVWKAIPALQGCGIAMLIISVLIAIYYNVIICYTLFYLFASFVSVLPWGSCNNPWNTPECKDKTKLLLDSCVIGDHPKIQIKNSTFCMTAYPNLTMVNFTSQANKTFVSGSEEYFKYFVLKISAGIEYPGEIRWPLAFCLFLAWVIVYASLAKGIKTSGKVVYFTATFPYVVLVILLIRGVTLPGAGAGIWYFITPKWEKLTDATVWKDAATQIFFSLSAAWGGLITLSSYNKFHNNCYRDTLIVTCTNSATSIFAGFVIFSVIGFMANERKVNIENVADQGPGIAFVVYPEALTRLPLSPFWAIIFFLMLLTLGLDTMFATIETIVTSISDEFPKYLRTHKPVFTLGCCICFFIMGFPMITQGGIYMFQLVDTYAASYALVIIAIFELVGISYVYGLQRFCEDIEMMIGFQPNIFWKVCWAFVTPTILTFILCFSFYQWEPMTYGSYRYPNWSMVLGWLMLACSVIWIPIMFVIKMYLAPGRFIERLKLVCSPQPDWGPFLAQHRGERYKNMIDPLGTSSLGLKLPVKDLELGTQC.

The disordered stretch occupies residues 1–64 (MDCSAPKEMN…RSASTGAQTF (64 aa)). At 1 to 201 (MDCSAPKEMN…ARGNWSSKLD (201 aa)) the chain is on the cytoplasmic side. A compositionally biased stretch (low complexity) spans 40–57 (PAAAPAAAVQPPRVPRSA). Serine 58 bears the Phosphoserine mark. Phosphothreonine is present on threonine 59. Residue serine 86 is modified to Phosphoserine. The next 3 membrane-spanning stretches (helical) occupy residues 202-222 (FILSMVGYAVGLGNVWRFPYL), 230-249 (AFLIPYLMMLALAGLPIFFL), and 273-293 (GCGIAMLIISVLIAIYYNVII). 4 residues coordinate Na(+): glycine 208, alanine 210, valine 211, and asparagine 215. The Extracellular segment spans residues 294 to 395 (CYTLFYLFAS…AGIEYPGEIR (102 aa)). An intrachain disulfide couples cysteine 313 to cysteine 322. 4 N-linked (GlcNAc...) asparagine glycosylation sites follow: asparagine 345, asparagine 355, asparagine 360, and asparagine 366. 5 consecutive transmembrane segments (helical) span residues 396-414 (WPLAFCLFLAWVIVYASLA), 423-440 (VVYFTATFPYVVLVILLI), 476-493 (IFFSLSAAWGGLITLSSY), 505-526 (LIVTCTNSATSIFAGFVIFSVI), and 559-578 (LPLSPFWAIIFFLMLLTLGL). Na(+)-binding residues include serine 479, asparagine 511, leucine 576, and aspartate 579. Helical transmembrane passes span 606–624 (VFTLGCCICFFIMGFPMIT), 640–660 (SYALVIIAIFELVGISYVYGL), 681–700 (VCWAFVTPTILTFILCFSFY), and 719–737 (LGWLMLACSVIWIPIMFVI). Over 738–799 (KMYLAPGRFI…VKDLELGTQC (62 aa)) the chain is Cytoplasmic.

It belongs to the sodium:neurotransmitter symporter (SNF) (TC 2.A.22) family. SLC6A5 subfamily. In terms of processing, N-glycosylated. As to expression, specifically expressed in spinal cord, brain stem, and to a lesser extent in the cerebellum.

The protein localises to the cell membrane. It carries out the reaction glycine(out) + chloride(out) + 3 Na(+)(out) = glycine(in) + chloride(in) + 3 Na(+)(in). Sodium- and chloride-dependent glycine transporter. Terminates the action of glycine by its high affinity sodium-dependent reuptake into presynaptic terminals. May be responsible for the termination of neurotransmission at strychnine-sensitive glycinergic synapses. In Rattus norvegicus (Rat), this protein is Sodium- and chloride-dependent glycine transporter 2 (Slc6a5).